A 180-amino-acid chain; its full sequence is Probable galaptin lec-8 (180 aa).

A Galectin domain is found at 11–138 (SAHAIREQLR…AAHIDEISFS (128 aa)).

The protein is Probable galaptin lec-8 (lec-8) of Caenorhabditis elegans.